The chain runs to 211 residues: Probable transcription repressor protein RGM1 (211 aa).

Positions 6–11 (PKRNKD) match the Nuclear localization signal motif. 2 C2H2-type zinc fingers span residues 19–44 (YRCV…IRKH) and 50–73 (FQCN…SSVH). Residues 178-211 (NIVELPPDSSDTPASPSKVQSFDQAKDASPNAKK) form a disordered region. Over residues 183–194 (PPDSSDTPASPS) the composition is skewed to low complexity.

It is found in the nucleus. The polypeptide is Probable transcription repressor protein RGM1 (RGM1) (Saccharomyces cerevisiae (strain ATCC 204508 / S288c) (Baker's yeast)).